Reading from the N-terminus, the 1792-residue chain is BTB/POZ domain-containing protein 8 (1792 aa).

BTB domains lie at 58–127 (TDVT…NIKN) and 206–273 (PDID…DIPD). 8 disordered regions span residues 528–554 (DKGD…SDSG), 581–658 (SDGL…PRQV), 670–692 (TGQK…SGAR), 707–768 (KPLK…CDSP), 788–815 (SRPV…NNSV), 831–989 (AILK…KPHK), 1151–1283 (ERTN…SNDR), and 1519–1607 (SIDS…KSLD). 2 stretches are compositionally biased toward polar residues: residues 541–552 (FSSSQQRKQVSD) and 588–601 (GHSS…INKT). Basic and acidic residues-rich tracts occupy residues 602-625 (LKQD…ELKT) and 640-650 (SKTENGDKARL). Polar residues predominate over residues 724-740 (GPSSRSTDSSMEFSIST). The span at 744–758 (DEPKENGSTEEEKPS) shows a compositional bias: basic and acidic residues. A compositionally biased stretch (polar residues) spans 838-865 (TSNGCTAAQQRTKSTPSNLTKTQGSQGE). The span at 866 to 877 (SPNSVKSSVSSR) shows a compositional bias: low complexity. 2 stretches are compositionally biased toward basic and acidic residues: residues 878-891 (QSDE…HNTT) and 927-939 (KKGE…DSKQ). Polar residues predominate over residues 947–956 (ISKTQPSSQR). The segment covering 969 to 987 (MFHDVRDNNNKDSVSEQKP) has biased composition (basic and acidic residues). Polar residues-rich tracts occupy residues 1151–1160 (ERTNGTLNSA) and 1195–1215 (SDVS…PKNM). The span at 1250 to 1259 (SDTGSATTSS) shows a compositional bias: low complexity. A compositionally biased stretch (basic and acidic residues) spans 1566-1594 (IQQRSKFLDSDVKSQERPCHLDLHQREPN). Over residues 1597–1607 (IPKNSSTKSLD) the composition is skewed to polar residues.

In terms of assembly, interacts (via N-terminus) with adapter protein complex AP-2 subunits alpha (AP2A1) and beta (AP2B1). As to expression, highly expressed in fetal brain. Weakly expressed in adult brain and prostate.

It is found in the cell projection. Its subcellular location is the axon. It localises to the presynapse. The protein localises to the cytoplasmic vesicle. The protein resides in the clathrin-coated vesicle. It is found in the nucleus. In terms of biological role, involved in clathrin-mediated endocytosis at the synapse. Plays a role in neuronal development and in synaptic vesicle recycling in mature neurons, a process required for normal synaptic transmission. The protein is BTB/POZ domain-containing protein 8 of Homo sapiens (Human).